Reading from the N-terminus, the 139-residue chain is D-ribose pyranase (139 aa).

His-20 serves as the catalytic Proton donor. Substrate is bound by residues Asp-28, His-106, and Phe-128–Asn-130.

The protein belongs to the RbsD / FucU family. RbsD subfamily. As to quaternary structure, homodecamer.

It localises to the cytoplasm. The catalysed reaction is beta-D-ribopyranose = beta-D-ribofuranose. The protein operates within carbohydrate metabolism; D-ribose degradation; D-ribose 5-phosphate from beta-D-ribopyranose: step 1/2. Its function is as follows. Catalyzes the interconversion of beta-pyran and beta-furan forms of D-ribose. The sequence is that of D-ribose pyranase from Yersinia pseudotuberculosis serotype O:1b (strain IP 31758).